Reading from the N-terminus, the 73-residue chain is N-terminal-borealin-like protein (73 aa).

The protein belongs to the borealin family. In terms of assembly, component of the aurora kinase complex composed of at least BIR1, BNL1, IPL1 and SLI15.

The protein resides in the nucleus. It localises to the cytoplasm. Its subcellular location is the cytoskeleton. The protein localises to the spindle. In terms of biological role, component of the aurora kinase complex, also called chromosomal passenger complex (CPC), essential for chromosome segregation and metaphase chromosome alignment. Mediates the SLI15-BIR1 interaction within the CPC. This is N-terminal-borealin-like protein (NBL1) from Saccharomyces cerevisiae (strain ATCC 204508 / S288c) (Baker's yeast).